The sequence spans 149 residues: Large ribosomal subunit protein bL9 (149 aa).

It belongs to the bacterial ribosomal protein bL9 family.

In terms of biological role, binds to the 23S rRNA. This is Large ribosomal subunit protein bL9 from Aquifex aeolicus (strain VF5).